The sequence spans 85 residues: MYIVVVYDVGVERVNKVKKFLRMHLNWVQNSVFEGEVTLAEFERIKEGLKKIIDENSDSVIIYKLRSMPPRETLGIEKNPIEEII.

Asp8 lines the Mg(2+) pocket.

The protein belongs to the CRISPR-associated endoribonuclease Cas2 protein family. In terms of assembly, homodimer, forms a heterotetramer with a Cas1 homodimer. Requires Mg(2+) as cofactor.

Functionally, CRISPR (clustered regularly interspaced short palindromic repeat), is an adaptive immune system that provides protection against mobile genetic elements (viruses, transposable elements and conjugative plasmids). CRISPR clusters contain sequences complementary to antecedent mobile elements and target invading nucleic acids. CRISPR clusters are transcribed and processed into CRISPR RNA (crRNA). Functions as a ssRNA-specific endoribonuclease. Involved in the integration of spacer DNA into the CRISPR cassette. This Pyrococcus furiosus (strain ATCC 43587 / DSM 3638 / JCM 8422 / Vc1) protein is CRISPR-associated endoribonuclease Cas2.